A 170-amino-acid chain; its full sequence is Photosystem I assembly protein Ycf3 (170 aa).

3 TPR repeats span residues 35 to 69 (AFTY…EIDP), 73 to 106 (SYIL…NPSL), and 121 to 154 (GEQA…APGN).

It belongs to the Ycf3 family.

The protein resides in the plastid. It localises to the chloroplast thylakoid membrane. In terms of biological role, essential for the assembly of the photosystem I (PSI) complex. May act as a chaperone-like factor to guide the assembly of the PSI subunits. The sequence is that of Photosystem I assembly protein Ycf3 from Cycas taitungensis (Prince sago).